A 375-amino-acid chain; its full sequence is MESNRDEAERCVRIAKAAIEAGDKEKAKRFLSKAERLYPSSEARALLQAFEKNDTAGNGPQSAKMAKGTEQPKAEKDSNASASSDTGKGHTQDQLDGVQRIKKCKTYYEVLGVSTDAGEEDLKKAYRKLALKFHPDKNHAPGATEAFKKIGNAYAVLSNPEKRKQYDLTGSEDQMQNNHRNGGFDYHRGFEADITPEDLFNMFFGGGFPSGSVHTFSNGRARYSHHQHHHHSGHDREDERADGGFSMFIQLMPIIVLILVSLLSQFMVSNPPYSLYPRSGQATKRVTENLQIAYYVSKDFQSEYSGILLQKLEKNIEEDYVANVRNNCWRERQQRSDLMHAAKVYRDERLKVKAESISMENCKELNRLTSLFRGG.

Over 1-242 the chain is Cytoplasmic; that stretch reads MESNRDEAER…GHDREDERAD (242 aa). The disordered stretch occupies residues 48–95; that stretch reads QAFEKNDTAGNGPQSAKMAKGTEQPKAEKDSNASASSDTGKGHTQDQL. Residues 106-170 enclose the J domain; that stretch reads TYYEVLGVST…EKRKQYDLTG (65 aa). Residues 243-263 form a helical membrane-spanning segment; the sequence is GGFSMFIQLMPIIVLILVSLL. Residues 264–375 are Lumenal-facing; it reads SQFMVSNPPY…NRLTSLFRGG (112 aa).

This sequence belongs to the DnaJ family. DNAJB12/DNAJB14 subfamily.

Its subcellular location is the endoplasmic reticulum membrane. Its function is as follows. Acts as a co-chaperone with HSPA8/Hsc70; required to promote protein folding and trafficking, prevent aggregation of client proteins, and promote unfolded proteins to endoplasmic reticulum-associated degradation (ERAD) pathway. Acts by determining hspa8/Hsc70's ATPase and polypeptide-binding activities. Can also act independently of hspa8/Hsc70: together with dnajb12, acts as a chaperone that promotes maturation of potassium channels by stabilizing nascent channel subunits and assembling them into tetramers. While stabilization of nascent channel proteins is dependent on hspa8/Hsc70, the process of oligomerization of channel subunits is independent of hspa8/Hsc70. The polypeptide is DnaJ homolog subfamily B member 14 (dnajb14) (Xenopus tropicalis (Western clawed frog)).